Consider the following 384-residue polypeptide: S-adenosylmethionine synthase (384 aa).

His15 contributes to the ATP binding site. Position 17 (Asp17) interacts with Mg(2+). Residue Glu43 participates in K(+) binding. Residues Glu56 and Gln99 each coordinate L-methionine. Residues 99 to 109 are flexible loop; sequence QSPDINQGVDR. Residues 164-166, 230-231, Asp239, 245-246, Ala262, and Lys266 contribute to the ATP site; these read DAK, RF, and RK. An L-methionine-binding site is contributed by Asp239. Lys270 contributes to the L-methionine binding site.

The protein belongs to the AdoMet synthase family. As to quaternary structure, homotetramer; dimer of dimers. Mg(2+) serves as cofactor. Requires K(+) as cofactor.

It localises to the cytoplasm. The enzyme catalyses L-methionine + ATP + H2O = S-adenosyl-L-methionine + phosphate + diphosphate. The protein operates within amino-acid biosynthesis; S-adenosyl-L-methionine biosynthesis; S-adenosyl-L-methionine from L-methionine: step 1/1. In terms of biological role, catalyzes the formation of S-adenosylmethionine (AdoMet) from methionine and ATP. The overall synthetic reaction is composed of two sequential steps, AdoMet formation and the subsequent tripolyphosphate hydrolysis which occurs prior to release of AdoMet from the enzyme. The chain is S-adenosylmethionine synthase from Salmonella agona (strain SL483).